A 464-amino-acid polypeptide reads, in one-letter code: Argininosuccinate lyase (464 aa).

Belongs to the lyase 1 family. Argininosuccinate lyase subfamily.

The protein localises to the cytoplasm. The catalysed reaction is 2-(N(omega)-L-arginino)succinate = fumarate + L-arginine. Its pathway is amino-acid biosynthesis; L-arginine biosynthesis; L-arginine from L-ornithine and carbamoyl phosphate: step 3/3. This chain is Argininosuccinate lyase, found in Stutzerimonas stutzeri (strain A1501) (Pseudomonas stutzeri).